The primary structure comprises 1401 residues: Enhancer of mRNA-decapping protein 4 (1401 aa).

Ala-2 bears the N-acetylalanine mark. 2 positions are modified to phosphoserine: Ser-3 and Ser-6. The tract at residues 23–42 (DRPAGGPSAESPRPSSAYNG) is disordered. 7 WD repeats span residues 121 to 164 (QPVA…VISV), 167 to 206 (SERT…VWRL), 217 to 269 (ILVH…VWDL), 287 to 326 (KQGF…FWQI), 335 to 385 (RCLH…MWCT), 389 to 426 (TCLQ…LSDV), and 432 to 475 (YVME…LRHT). Lys-125 bears the N6-acetyllysine mark. Residues 545–565 (TFGESRPELGSEGLGSAAHGS) are disordered. A phosphoserine mark is found at Ser-560, Ser-565, Ser-583, and Ser-585. Disordered stretches follow at residues 603–628 (ASLQ…SSSS) and 662–702 (DGSL…QVPT). The segment covering 609-628 (TASPSSSSSGSSSSSSSSSS) has biased composition (low complexity). The span at 663 to 675 (GSLTMSSSGSLQA) shows a compositional bias: polar residues. The residue at position 676 (Ser-676) is a Phosphoserine. A compositionally biased stretch (low complexity) spans 677–689 (PRGLLPGLLPAPA). Position 693 is a phosphothreonine (Thr-693). Phosphoserine is present on residues Ser-708, Ser-723, and Ser-725. Disordered regions lie at residues 717-741 (LGLP…TALS) and 778-808 (LLSP…HNTP). A compositionally biased stretch (polar residues) spans 722–741 (ASPSRTRSPDVISSASTALS). Thr-727 carries the phosphothreonine modification. A phosphoserine mark is found at Ser-729 and Ser-741. At Thr-821 the chain carries Phosphothreonine. Phosphoserine occurs at positions 844, 871, 875, 879, 887, 890, and 892. Residues 868 to 946 (QRDSQDASAE…RLTEHQVAEP (79 aa)) form a disordered region. Residues 913–934 (GSPRTSPKLKRKSKKDDGDAAM) form a sufficient for nuclear localization region. Positions 954 to 1025 (IWQQQRELAE…GGQLQEQLTQ (72 aa)) form a coiled coil. A phosphoserine mark is found at Ser-967 and Ser-1380.

Belongs to the WD repeat EDC4 family. In terms of assembly, part of a decapping complex consisting of DCP1A, DCP2, EDC3, EDC4 and probably DDX6. Part of a complex consisting of DCP1A, EDC3, EDC4 and DDX6. Part of a complex consisting of DCP1B, EDC3, EDC4 and DDX6. Interacts with DCP2. Interacts with RC3H1. Interacts with NBDY. Interacts with TEX19. Interacts with LSM14A. Interacts with DDX6. As to quaternary structure, (Microbial infection) Interacts with rotavirus A non-structural protein 2; this interaction probably plays a role in the sequestration of EDC4 in viral factories. Interacts with rotavirus A non-structural protein 5; this interaction probably plays a role in its sequestration in viral factories.

The protein localises to the cytoplasm. It is found in the P-body. Its subcellular location is the nucleus. In terms of biological role, in the process of mRNA degradation, seems to play a role in mRNA decapping. Component of a complex containing DCP2 and DCP1A which functions in decapping of ARE-containing mRNAs. Promotes complex formation between DCP1A and DCP2. Enhances the catalytic activity of DCP2 (in vitro). The chain is Enhancer of mRNA-decapping protein 4 (EDC4) from Homo sapiens (Human).